The chain runs to 918 residues: Protein translocase subunit SecA (918 aa).

ATP-binding positions include Gln87, 105-109 (GEGKT), and Asp494. Residues 863–883 (KQDDTSPKEYKKIGQEQRAEV) show a composition bias toward basic and acidic residues. Positions 863–918 (KQDDTSPKEYKKIGQEQRAEVDMFGNELKSNKTKPQVSSTTSSGGGSERRSSRRKK) are disordered.

It belongs to the SecA family. In terms of assembly, monomer and homodimer. Part of the essential Sec protein translocation apparatus which comprises SecA, SecYEG and auxiliary proteins SecDF. Other proteins may also be involved.

Its subcellular location is the cell inner membrane. It is found in the cytoplasm. The enzyme catalyses ATP + H2O + cellular proteinSide 1 = ADP + phosphate + cellular proteinSide 2.. Functionally, part of the Sec protein translocase complex. Interacts with the SecYEG preprotein conducting channel. Has a central role in coupling the hydrolysis of ATP to the transfer of proteins into and across the cell membrane, serving as an ATP-driven molecular motor driving the stepwise translocation of polypeptide chains across the membrane. The protein is Protein translocase subunit SecA of Leptospira biflexa serovar Patoc (strain Patoc 1 / Ames).